The following is a 245-amino-acid chain: Acetylglutamate kinase (245 aa).

Residues 41 to 42, Arg63, and Asn156 contribute to the substrate site; that span reads GG.

This sequence belongs to the acetylglutamate kinase family. ArgB subfamily.

The protein localises to the cytoplasm. It catalyses the reaction N-acetyl-L-glutamate + ATP = N-acetyl-L-glutamyl 5-phosphate + ADP. It participates in amino-acid biosynthesis; L-arginine biosynthesis; N(2)-acetyl-L-ornithine from L-glutamate: step 2/4. Catalyzes the ATP-dependent phosphorylation of N-acetyl-L-glutamate. The polypeptide is Acetylglutamate kinase (Streptococcus gordonii (strain Challis / ATCC 35105 / BCRC 15272 / CH1 / DL1 / V288)).